Consider the following 151-residue polypeptide: MAITVKGLTNKLTRTQRRIAVVEFIFSLLFFLPKEAEVIQADFLEYDTKERQLNEWQKLIVKAFSENIFSFQKKIEEQQLKNQLEIQTKYNKISGKKIDLLTTAVVLCALSEQKAHNTDKPLLISEALLIMDHYSQGAEKKQTHALLDKLL.

This is an uncharacterized protein from Mycoplasma genitalium (strain ATCC 33530 / DSM 19775 / NCTC 10195 / G37) (Mycoplasmoides genitalium).